We begin with the raw amino-acid sequence, 274 residues long: Diaminopimelate epimerase (274 aa).

Residues asparagine 11, glutamine 44, and asparagine 64 each contribute to the substrate site. Cysteine 73 serves as the catalytic Proton donor. Substrate contacts are provided by residues 74 to 75 (GN), asparagine 157, asparagine 190, and 208 to 209 (ER). Residue cysteine 217 is the Proton acceptor of the active site. 218–219 (GS) provides a ligand contact to substrate.

It belongs to the diaminopimelate epimerase family. In terms of assembly, homodimer.

The protein localises to the cytoplasm. The enzyme catalyses (2S,6S)-2,6-diaminopimelate = meso-2,6-diaminopimelate. It participates in amino-acid biosynthesis; L-lysine biosynthesis via DAP pathway; DL-2,6-diaminopimelate from LL-2,6-diaminopimelate: step 1/1. Functionally, catalyzes the stereoinversion of LL-2,6-diaminopimelate (L,L-DAP) to meso-diaminopimelate (meso-DAP), a precursor of L-lysine and an essential component of the bacterial peptidoglycan. The sequence is that of Diaminopimelate epimerase from Mannheimia succiniciproducens (strain KCTC 0769BP / MBEL55E).